The chain runs to 120 residues: NAD(P)H-quinone oxidoreductase subunit 3, chloroplastic (120 aa).

The next 3 membrane-spanning stretches (helical) occupy residues 9 to 29 (IFWAFLIISSLIPILAFLISG), 64 to 84 (MFALVFVVFDVETVFLYPWAM), and 88 to 108 (VLGVSVFIEALIFVLILIVGL).

The protein belongs to the complex I subunit 3 family. As to quaternary structure, NDH is composed of at least 16 different subunits, 5 of which are encoded in the nucleus.

Its subcellular location is the plastid. It is found in the chloroplast thylakoid membrane. The enzyme catalyses a plastoquinone + NADH + (n+1) H(+)(in) = a plastoquinol + NAD(+) + n H(+)(out). The catalysed reaction is a plastoquinone + NADPH + (n+1) H(+)(in) = a plastoquinol + NADP(+) + n H(+)(out). NDH shuttles electrons from NAD(P)H:plastoquinone, via FMN and iron-sulfur (Fe-S) centers, to quinones in the photosynthetic chain and possibly in a chloroplast respiratory chain. The immediate electron acceptor for the enzyme in this species is believed to be plastoquinone. Couples the redox reaction to proton translocation, and thus conserves the redox energy in a proton gradient. In Lupinus luteus (European yellow lupine), this protein is NAD(P)H-quinone oxidoreductase subunit 3, chloroplastic.